Consider the following 539-residue polypeptide: GMP synthase [glutamine-hydrolyzing] (539 aa).

The region spanning 4–202 (KILILDFGSQ…VLQIAGAKPD (199 aa)) is the Glutamine amidotransferase type-1 domain. Cysteine 81 functions as the Nucleophile in the catalytic mechanism. Catalysis depends on residues histidine 176 and glutamate 178. In terms of domain architecture, GMPS ATP-PPase spans 203–395 (WIMKNHIEEA…LGLPPEMVYR (193 aa)). ATP is bound at residue 230–236 (SGGVDSS).

In terms of assembly, homodimer.

The enzyme catalyses XMP + L-glutamine + ATP + H2O = GMP + L-glutamate + AMP + diphosphate + 2 H(+). Its pathway is purine metabolism; GMP biosynthesis; GMP from XMP (L-Gln route): step 1/1. Catalyzes the synthesis of GMP from XMP. The chain is GMP synthase [glutamine-hydrolyzing] from Burkholderia vietnamiensis (strain G4 / LMG 22486) (Burkholderia cepacia (strain R1808)).